A 529-amino-acid polypeptide reads, in one-letter code: Lysine--tRNA ligase (529 aa).

The short motif at 29–37 (ISGSVHIGN) is the 'HIGH' region element. Positions 274–278 (AMSKS) match the 'KMSKS' region motif. K277 serves as a coordination point for ATP.

It belongs to the class-I aminoacyl-tRNA synthetase family.

The protein localises to the cytoplasm. The enzyme catalyses tRNA(Lys) + L-lysine + ATP = L-lysyl-tRNA(Lys) + AMP + diphosphate. This Methanosphaera stadtmanae (strain ATCC 43021 / DSM 3091 / JCM 11832 / MCB-3) protein is Lysine--tRNA ligase.